A 694-amino-acid chain; its full sequence is U-box domain-containing protein 1 (694 aa).

The region spanning 292–366 is the U-box domain; that stretch reads NIPDEFRCPI…HQWCYENNVK (75 aa). ARM repeat units follow at residues 392-432, 435-474, 476-516, 519-558, 560-599, 601-641, and 646-685; these read SENK…LLAK, MDNR…NLSI, DNNK…SLSM, DCKV…NLAV, NPNK…VLLG, SEGL…GLCK, and LVAM…LLNR.

In terms of assembly, interacts with LYK3. Binds to NORK/DMI2. Post-translationally, phosphorylated by LYK3 in vitro. Phosphorylated by NORK/DMI2. Present ubiquitously at very low levels during nonsymbiotic growth. Accumulates in roots and nodules during symbiotic growth with rhizobia and mycorrhiza.

The protein localises to the cell membrane. The catalysed reaction is S-ubiquitinyl-[E2 ubiquitin-conjugating enzyme]-L-cysteine + [acceptor protein]-L-lysine = [E2 ubiquitin-conjugating enzyme]-L-cysteine + N(6)-ubiquitinyl-[acceptor protein]-L-lysine.. The protein operates within protein modification; protein ubiquitination. Exhibits U-box-dependent E3 ubiquitin ligase activity in vitro. Negatively modulates successive stages of infection and development of rhizobial (e.g. Sinorhizobium meliloti) and arbuscular mycorrhizal fungi (AM, e.g. Rhizophagus irregularis) symbioses, in an ubiquitin ligase activity-dependent manner. Negative regulator of the LYK3 signaling pathway leading to nitrogen-fixing symbiosis (e.g. infection and nodulation) by rhizobia. May be involved in the discrimination of rhizobium strains producing variant Nod factors. The chain is U-box domain-containing protein 1 from Medicago truncatula (Barrel medic).